The chain runs to 66 residues: Conotoxin Lt5.6 (66 aa).

Residues 1–19 form the signal peptide; that stretch reads MLCLPVFIILLLLASPAAP. The propeptide occupies 20-54; it reads KSLETRIQNDLIRAGLTDADLKTEKGFLSGLLNVA.

The protein belongs to the conotoxin T superfamily. Contains 2 disulfide bonds that can be either 'C1-C3, C2-C4' or 'C1-C4, C2-C3', since these disulfide connectivities have been observed for conotoxins with cysteine framework V (for examples, see AC P0DQQ7 and AC P81755). As to expression, expressed by the venom duct.

The protein resides in the secreted. This Conus litteratus (Lettered cone) protein is Conotoxin Lt5.6.